Consider the following 30-residue polypeptide: Snake venom serine protease (30 aa).

The region spanning 1 to 30 (VIGGDECNINEHRFLVALYDPDGFLSGGIL) is the Peptidase S1 domain.

It belongs to the peptidase S1 family. Snake venom subfamily. In terms of assembly, monomer. In terms of processing, N-Glycosylated. As to expression, expressed by the venom gland.

The protein localises to the secreted. Inhibited by diisopropylfluorophosphate (DFP). Snake venom serine protease that catalyzes the hydrolysis of arginine esters, kallikrein substrates Pro-Phe-Arg-MCA and Z-Phe-Arg-MCA. Cleaves kininogen analogs to release bradykinin. Induces contraction of the isolated rat uterus directly at high concentrations, but provokes more forceful contractions when injected in presence of bovine plasma. Shows capillary permeability-increasing activity and hypotensive activity on the anesthetized rat. In Crotalus viridis viridis (Prairie rattlesnake), this protein is Snake venom serine protease.